The following is a 412-amino-acid chain: Gamma-glutamyl phosphate reductase (412 aa).

Belongs to the gamma-glutamyl phosphate reductase family.

It localises to the cytoplasm. The catalysed reaction is L-glutamate 5-semialdehyde + phosphate + NADP(+) = L-glutamyl 5-phosphate + NADPH + H(+). The protein operates within amino-acid biosynthesis; L-proline biosynthesis; L-glutamate 5-semialdehyde from L-glutamate: step 2/2. Functionally, catalyzes the NADPH-dependent reduction of L-glutamate 5-phosphate into L-glutamate 5-semialdehyde and phosphate. The product spontaneously undergoes cyclization to form 1-pyrroline-5-carboxylate. The chain is Gamma-glutamyl phosphate reductase from Actinobacillus pleuropneumoniae serotype 7 (strain AP76).